The following is a 382-amino-acid chain: Galactokinase (382 aa).

34 to 37 contacts substrate; sequence EHTD. 124-130 contributes to the ATP binding site; that stretch reads GAGLSSS. Mg(2+)-binding residues include Ser-130 and Glu-162. Asp-174 acts as the Proton acceptor in catalysis. Tyr-223 lines the substrate pocket.

This sequence belongs to the GHMP kinase family. GalK subfamily.

The protein resides in the cytoplasm. The enzyme catalyses alpha-D-galactose + ATP = alpha-D-galactose 1-phosphate + ADP + H(+). It participates in carbohydrate metabolism; galactose metabolism. Functionally, catalyzes the transfer of the gamma-phosphate of ATP to D-galactose to form alpha-D-galactose-1-phosphate (Gal-1-P). The chain is Galactokinase from Cronobacter sakazakii (strain ATCC BAA-894) (Enterobacter sakazakii).